The chain runs to 44 residues: MKRTLGGTTRKRQKTSGFRARMRTASGRRVLSARRRRGRHRLAV.

2 stretches are compositionally biased toward basic residues: residues 1–14 (MKRT…KRQK) and 31–44 (LSAR…RLAV). A disordered region spans residues 1 to 44 (MKRTLGGTTRKRQKTSGFRARMRTASGRRVLSARRRRGRHRLAV).

It belongs to the bacterial ribosomal protein bL34 family.

The polypeptide is Large ribosomal subunit protein bL34 (Gloeobacter violaceus (strain ATCC 29082 / PCC 7421)).